We begin with the raw amino-acid sequence, 304 residues long: D-alanine--D-alanine ligase (304 aa).

In terms of domain architecture, ATP-grasp spans 101–298; sequence KKIFIKNKIL…FIKLIEWILK (198 aa). ATP is bound at residue 131–184; sequence EKNLKFPVVVKPINEGSSVHVYICDKTNILKNLKVLKSYNEILIEEFIPGREIQ. Positions 253, 265, and 267 each coordinate Mg(2+).

This sequence belongs to the D-alanine--D-alanine ligase family. The cofactor is Mg(2+). It depends on Mn(2+) as a cofactor.

The protein resides in the cytoplasm. The enzyme catalyses 2 D-alanine + ATP = D-alanyl-D-alanine + ADP + phosphate + H(+). The protein operates within cell wall biogenesis; peptidoglycan biosynthesis. Its function is as follows. Cell wall formation. This Pelagibacter ubique (strain HTCC1062) protein is D-alanine--D-alanine ligase.